We begin with the raw amino-acid sequence, 136 residues long: Aspartate 1-decarboxylase (136 aa).

The active-site Schiff-base intermediate with substrate; via pyruvic acid is Ser-25. Ser-25 is subject to Pyruvic acid (Ser). Thr-57 serves as a coordination point for substrate. Catalysis depends on Tyr-58, which acts as the Proton donor. A substrate-binding site is contributed by 73 to 75; that stretch reads GAA.

It belongs to the PanD family. Heterooctamer of four alpha and four beta subunits. Pyruvate is required as a cofactor. Post-translationally, is synthesized initially as an inactive proenzyme, which is activated by self-cleavage at a specific serine bond to produce a beta-subunit with a hydroxyl group at its C-terminus and an alpha-subunit with a pyruvoyl group at its N-terminus.

It is found in the cytoplasm. It carries out the reaction L-aspartate + H(+) = beta-alanine + CO2. Its pathway is cofactor biosynthesis; (R)-pantothenate biosynthesis; beta-alanine from L-aspartate: step 1/1. Catalyzes the pyruvoyl-dependent decarboxylation of aspartate to produce beta-alanine. The sequence is that of Aspartate 1-decarboxylase from Mycolicibacterium smegmatis (strain ATCC 700084 / mc(2)155) (Mycobacterium smegmatis).